A 139-amino-acid chain; its full sequence is Putative pre-16S rRNA nuclease (139 aa).

This sequence belongs to the YqgF nuclease family.

The protein resides in the cytoplasm. Functionally, could be a nuclease involved in processing of the 5'-end of pre-16S rRNA. The sequence is that of Putative pre-16S rRNA nuclease from Streptococcus sanguinis (strain SK36).